Reading from the N-terminus, the 225-residue chain is Phosphoribosylformylglycinamidine synthase subunit PurQ (225 aa).

Positions arginine 4–alanine 225 constitute a Glutamine amidotransferase type-1 domain. The active-site Nucleophile is cysteine 87. Active-site residues include histidine 196 and glutamate 198.

As to quaternary structure, part of the FGAM synthase complex composed of 1 PurL, 1 PurQ and 2 PurS subunits.

The protein localises to the cytoplasm. The catalysed reaction is N(2)-formyl-N(1)-(5-phospho-beta-D-ribosyl)glycinamide + L-glutamine + ATP + H2O = 2-formamido-N(1)-(5-O-phospho-beta-D-ribosyl)acetamidine + L-glutamate + ADP + phosphate + H(+). The enzyme catalyses L-glutamine + H2O = L-glutamate + NH4(+). The protein operates within purine metabolism; IMP biosynthesis via de novo pathway; 5-amino-1-(5-phospho-D-ribosyl)imidazole from N(2)-formyl-N(1)-(5-phospho-D-ribosyl)glycinamide: step 1/2. Part of the phosphoribosylformylglycinamidine synthase complex involved in the purines biosynthetic pathway. Catalyzes the ATP-dependent conversion of formylglycinamide ribonucleotide (FGAR) and glutamine to yield formylglycinamidine ribonucleotide (FGAM) and glutamate. The FGAM synthase complex is composed of three subunits. PurQ produces an ammonia molecule by converting glutamine to glutamate. PurL transfers the ammonia molecule to FGAR to form FGAM in an ATP-dependent manner. PurS interacts with PurQ and PurL and is thought to assist in the transfer of the ammonia molecule from PurQ to PurL. The sequence is that of Phosphoribosylformylglycinamidine synthase subunit PurQ from Nocardia farcinica (strain IFM 10152).